The following is a 160-amino-acid chain: S-ribosylhomocysteine lyase (160 aa).

Histidine 57, histidine 61, and cysteine 127 together coordinate Fe cation.

Belongs to the LuxS family. Homodimer. Fe cation is required as a cofactor.

It carries out the reaction S-(5-deoxy-D-ribos-5-yl)-L-homocysteine = (S)-4,5-dihydroxypentane-2,3-dione + L-homocysteine. Its function is as follows. Involved in the synthesis of autoinducer 2 (AI-2) which is secreted by bacteria and is used to communicate both the cell density and the metabolic potential of the environment. The regulation of gene expression in response to changes in cell density is called quorum sensing. Catalyzes the transformation of S-ribosylhomocysteine (RHC) to homocysteine (HC) and 4,5-dihydroxy-2,3-pentadione (DPD). The polypeptide is S-ribosylhomocysteine lyase (Streptococcus agalactiae serotype V (strain ATCC BAA-611 / 2603 V/R)).